The sequence spans 297 residues: Halorhodopsin (297 aa).

Residues 1 to 31 (MRSRTYHDQSVCGPYGSQRTDCDRDTDAGSD) form a disordered region. Topologically, residues 1 to 45 (MRSRTYHDQSVCGPYGSQRTDCDRDTDAGSDTDVHGAQVATQIRT) are extracellular. A helical membrane pass occupies residues 46-71 (DTLLHSSLWVNIALAGLSILVFLYMA). Topologically, residues 72-77 (RTVRAN) are cytoplasmic. The chain crosses the membrane as a helical span at residues 78–101 (RARLIVGATLMIPLVSLSSYLGLV). The Extracellular portion of the chain corresponds to 102–125 (TGLTAGPIEMPAAHALAGEDVLSQ). A helical transmembrane segment spans residues 126–147 (WGRYLTWTLSTPMILLALGWLA). Topologically, residues 148–150 (EVD) are cytoplasmic. A helical membrane pass occupies residues 151 to 174 (TADLFVVIAADIGMCLTGLAAALT). Residues 175–177 (TSS) lie on the Extracellular side of the membrane. A helical transmembrane segment spans residues 178–200 (YAFRWAFYLVSTAFFVVVLYALL). The Cytoplasmic portion of the chain corresponds to 201–212 (AKWPTNAEAAGT). Residues 213–236 (GDIFGTLRWLTVILWLGYPILWAL) traverse the membrane as a helical segment. At 237–246 (GVEGFALVDS) the chain is on the extracellular side. The helical transmembrane segment at 247–275 (VGLTSWGYSLLDIGAKYLFAALLLRWVAN) threads the bilayer. Lys-262 is modified (N6-(retinylidene)lysine). The Cytoplasmic segment spans residues 276–297 (NERTIAVGQRSGRGAIGDPVED).

Belongs to the archaeal/bacterial/fungal opsin family.

It localises to the cell membrane. In terms of biological role, light-driven chloride pump. In Haloterrigena sp. (strain arg-4), this protein is Halorhodopsin (hop).